The sequence spans 170 residues: Peptidyl-prolyl cis-trans isomerase-like 3 (170 aa).

The PPIase cyclophilin-type domain maps to 1–160 (MSVTLHTDLG…QEFRIKSVTI (160 aa)).

This sequence belongs to the cyclophilin-type PPIase family. PPIL3 subfamily.

It carries out the reaction [protein]-peptidylproline (omega=180) = [protein]-peptidylproline (omega=0). Its function is as follows. PPIases accelerate the folding of proteins. It catalyzes the cis-trans isomerization of proline imidic peptide bonds in oligopeptides. The polypeptide is Peptidyl-prolyl cis-trans isomerase-like 3 (cyp4) (Rhizopus delemar (strain RA 99-880 / ATCC MYA-4621 / FGSC 9543 / NRRL 43880) (Mucormycosis agent)).